The chain runs to 353 residues: Outer membrane protein P5 (353 aa).

A signal peptide spans Met1 to Ala21. 8 beta stranded membrane passes run Thr27–Ala37, Ser58–Ile69, Leu77–Asp85, His104–Glu115, Leu120–Val128, Gly158–Ala167, Leu172–Gln179, and Ser205–Arg213. The OmpA-like domain occupies Val227 to Lys353. Cys326 and Cys338 form a disulfide bridge.

Belongs to the outer membrane OOP (TC 1.B.6) superfamily. OmpA family. In terms of assembly, monomer and homodimer.

The protein localises to the cell outer membrane. Functionally, with TolR probably plays a role in maintaining the position of the peptidoglycan cell wall in the periplasm. Acts as a porin with low permeability that allows slow penetration of small solutes; an internal gate slows down solute passage. Its function is as follows. Reconstitution in planar bilayers with lithium dodecyl sulfate-solublized P5 yields narrow pores (58 pS conductance) with a low probability of opening, whereas n-octyl-bD-glucopyranoside-solubilized P5 forms large pores (1.1 nS conductance) with high open probability. The large pore easily converts to the smaller pore at room temperature; at 42 degrees Celsius the smaller pore converts to the larger one. This is Outer membrane protein P5 from Haemophilus influenzae (strain ATCC 51907 / DSM 11121 / KW20 / Rd).